The primary structure comprises 103 residues: Small ribosomal subunit protein uS10 (103 aa).

Belongs to the universal ribosomal protein uS10 family. As to quaternary structure, part of the 30S ribosomal subunit.

Functionally, involved in the binding of tRNA to the ribosomes. The sequence is that of Small ribosomal subunit protein uS10 from Chlorobaculum parvum (strain DSM 263 / NCIMB 8327) (Chlorobium vibrioforme subsp. thiosulfatophilum).